Reading from the N-terminus, the 366-residue chain is S-adenosylmethionine:tRNA ribosyltransferase-isomerase (366 aa).

The protein belongs to the QueA family. Monomer.

The protein resides in the cytoplasm. The enzyme catalyses 7-aminomethyl-7-carbaguanosine(34) in tRNA + S-adenosyl-L-methionine = epoxyqueuosine(34) in tRNA + adenine + L-methionine + 2 H(+). The protein operates within tRNA modification; tRNA-queuosine biosynthesis. Transfers and isomerizes the ribose moiety from AdoMet to the 7-aminomethyl group of 7-deazaguanine (preQ1-tRNA) to give epoxyqueuosine (oQ-tRNA). This chain is S-adenosylmethionine:tRNA ribosyltransferase-isomerase, found in Agrobacterium fabrum (strain C58 / ATCC 33970) (Agrobacterium tumefaciens (strain C58)).